The chain runs to 479 residues: Auxin transporter-like protein 1 (479 aa).

Topologically, residues 1–58 (MLSEKQGEETMMSSLNETIELNEEREEEKGASPGSGFKNFLWHGGSVYDAWFSCASNQ) are cytoplasmic. Residues 59–76 (VAQVLLTLPYSFSQLGMI) form a helical membrane-spanning segment. Residues 77-78 (SG) are Extracellular-facing. Residues 79–99 (IIFQVFYGLMGSWTAYLISIL) traverse the membrane as a helical segment. Over 100 to 134 (YVEYRSRKEKENVSFKNHVIQWFEVLEGLLGPYWK) the chain is Cytoplasmic. Residues 135-155 (AIGLAFNCTFLLFGSVIQLIA) traverse the membrane as a helical segment. Residues 156-171 (CASNIYYINDHLDKRT) are Extracellular-facing. Residues 172-192 (WTYIFGACCATTVFIPSFHNY) traverse the membrane as a helical segment. At 193–195 (RIW) the chain is on the cytoplasmic side. The helical transmembrane segment at 196–216 (SFLGLGMTTYTAWYMTIAAIV) threads the bilayer. The Extracellular segment spans residues 217 to 231 (HGQVENVVHSGPKKM). The chain crosses the membrane as a helical span at residues 232-252 (VWYFTGATNILYTFGGHAVTV). The Cytoplasmic segment spans residues 253 to 265 (EIMHAMWKPQKFK). Residues 266 to 286 (AIYFFATLYVFTLTLPSAIAV) traverse the membrane as a helical segment. Residues 287 to 313 (YWAFGDQLLDHSNAFSLLPRNAWRDAG) are Extracellular-facing. The chain crosses the membrane as a helical span at residues 314–334 (VILMLIHQFITFGFACTPLYF). Over 335–355 (VWEKVIGMHDTKSIFLRALAR) the chain is Cytoplasmic. A helical transmembrane segment spans residues 356–376 (LPVVIPIWFLAIIFPFFGPIN). Position 377 (serine 377) is a topological domain, extracellular. A helical membrane pass occupies residues 378-398 (AVGALLVSFTVYVIPASAHML). Residues 399-421 (TYRSASARQNAAEKLPKVIPSWT) lie on the Cytoplasmic side of the membrane. Residues 422–442 (LMYVINAFVVIWVTIVGFGFG) traverse the membrane as a helical segment. Residues 443–479 (GWASMTNFIKQVDTFGLFAKCYQCPPKLPASNHTMHH) lie on the Extracellular side of the membrane. A glycan (N-linked (GlcNAc...) asparagine) is linked at asparagine 474.

This sequence belongs to the amino acid/polyamine transporter 2 family. Amino acid/auxin permease (AAAP) (TC 2.A.18.1) subfamily. In terms of tissue distribution, shoots and roots of nodulating plants. Higher levels in roots, flowers and stems, lower in nodules, leaves, petioles and shoot apices.

It is found in the cell membrane. Its function is as follows. Carrier protein involved in proton-driven auxin influx. Mediates the formation of auxin gradient from developing leaves (site of auxin biosynthesis) to tips by contributing to the loading of auxin in vascular tissues and facilitating acropetal (base to tip) auxin transport within inner tissues of the root apex, and basipetal (tip to base) auxin transport within outer tissues of the root apex. May be involved in lateral roots and nodules formation. The chain is Auxin transporter-like protein 1 (LAX1) from Medicago truncatula (Barrel medic).